We begin with the raw amino-acid sequence, 111 residues long: MKISYFIRRGKKTSRRSHFIKMKKNIITTQLFKPDNAFIFFSGIHGSVNRATYKYKISKTFGRFLAHISCLICILSKRIFVLSFSVIGSFCHPSIVHFDCLLFFLDTTPCL.

Residues 60–80 (TFGRFLAHISCLICILSKRIF) traverse the membrane as a helical segment.

It is found in the mitochondrion membrane. This is an uncharacterized protein from Arabidopsis thaliana (Mouse-ear cress).